The following is a 323-amino-acid chain: Acetyl-coenzyme A carboxylase carboxyl transferase subunit alpha (323 aa).

Residues 39–293 enclose the CoA carboxyltransferase C-terminal domain; it reads RLAGKSQQLT…KRSLAESLRQ (255 aa).

The protein belongs to the AccA family. In terms of assembly, acetyl-CoA carboxylase is a heterohexamer composed of biotin carboxyl carrier protein (AccB), biotin carboxylase (AccC) and two subunits each of ACCase subunit alpha (AccA) and ACCase subunit beta (AccD).

The protein resides in the cytoplasm. It catalyses the reaction N(6)-carboxybiotinyl-L-lysyl-[protein] + acetyl-CoA = N(6)-biotinyl-L-lysyl-[protein] + malonyl-CoA. The protein operates within lipid metabolism; malonyl-CoA biosynthesis; malonyl-CoA from acetyl-CoA: step 1/1. In terms of biological role, component of the acetyl coenzyme A carboxylase (ACC) complex. First, biotin carboxylase catalyzes the carboxylation of biotin on its carrier protein (BCCP) and then the CO(2) group is transferred by the carboxyltransferase to acetyl-CoA to form malonyl-CoA. The chain is Acetyl-coenzyme A carboxylase carboxyl transferase subunit alpha from Cupriavidus necator (strain ATCC 17699 / DSM 428 / KCTC 22496 / NCIMB 10442 / H16 / Stanier 337) (Ralstonia eutropha).